Here is a 359-residue protein sequence, read N- to C-terminus: Homoserine O-acetyltransferase (359 aa).

Residues 49–332 (VLICHALTGS…QSSYGHDAFL (284 aa)) enclose the AB hydrolase-1 domain. S143 acts as the Nucleophile in catalysis. R212 provides a ligand contact to substrate. Active-site residues include D299 and H328. A substrate-binding site is contributed by D329.

Belongs to the AB hydrolase superfamily. MetX family. In terms of assembly, homodimer.

The protein localises to the cytoplasm. It catalyses the reaction L-homoserine + acetyl-CoA = O-acetyl-L-homoserine + CoA. It functions in the pathway amino-acid biosynthesis; L-methionine biosynthesis via de novo pathway; O-acetyl-L-homoserine from L-homoserine: step 1/1. Its function is as follows. Transfers an acetyl group from acetyl-CoA to L-homoserine, forming acetyl-L-homoserine. In Trichormus variabilis (strain ATCC 29413 / PCC 7937) (Anabaena variabilis), this protein is Homoserine O-acetyltransferase.